Reading from the N-terminus, the 211-residue chain is ATP phosphoribosyltransferase (211 aa).

The protein belongs to the ATP phosphoribosyltransferase family. Short subfamily. In terms of assembly, heteromultimer composed of HisG and HisZ subunits.

It localises to the cytoplasm. It carries out the reaction 1-(5-phospho-beta-D-ribosyl)-ATP + diphosphate = 5-phospho-alpha-D-ribose 1-diphosphate + ATP. Its pathway is amino-acid biosynthesis; L-histidine biosynthesis; L-histidine from 5-phospho-alpha-D-ribose 1-diphosphate: step 1/9. In terms of biological role, catalyzes the condensation of ATP and 5-phosphoribose 1-diphosphate to form N'-(5'-phosphoribosyl)-ATP (PR-ATP). Has a crucial role in the pathway because the rate of histidine biosynthesis seems to be controlled primarily by regulation of HisG enzymatic activity. The chain is ATP phosphoribosyltransferase from Pseudomonas fluorescens (strain Pf0-1).